The primary structure comprises 49 residues: Large ribosomal subunit protein eL40 (49 aa).

Belongs to the eukaryotic ribosomal protein eL40 family.

This Archaeoglobus fulgidus (strain ATCC 49558 / DSM 4304 / JCM 9628 / NBRC 100126 / VC-16) protein is Large ribosomal subunit protein eL40.